Here is a 451-residue protein sequence, read N- to C-terminus: Methylenetetrahydrofolate--tRNA-(uracil-5-)-methyltransferase TrmFO (451 aa).

9 to 14 contacts FAD; sequence GGGMAG.

Belongs to the MnmG family. TrmFO subfamily. Requires FAD as cofactor.

The protein resides in the cytoplasm. It carries out the reaction uridine(54) in tRNA + (6R)-5,10-methylene-5,6,7,8-tetrahydrofolate + NADH + H(+) = 5-methyluridine(54) in tRNA + (6S)-5,6,7,8-tetrahydrofolate + NAD(+). The enzyme catalyses uridine(54) in tRNA + (6R)-5,10-methylene-5,6,7,8-tetrahydrofolate + NADPH + H(+) = 5-methyluridine(54) in tRNA + (6S)-5,6,7,8-tetrahydrofolate + NADP(+). In terms of biological role, catalyzes the folate-dependent formation of 5-methyl-uridine at position 54 (M-5-U54) in all tRNAs. In Dinoroseobacter shibae (strain DSM 16493 / NCIMB 14021 / DFL 12), this protein is Methylenetetrahydrofolate--tRNA-(uracil-5-)-methyltransferase TrmFO.